Consider the following 124-residue polypeptide: Small ribosomal subunit protein uS12 (124 aa).

3-methylthioaspartic acid is present on Asp89.

This sequence belongs to the universal ribosomal protein uS12 family. In terms of assembly, part of the 30S ribosomal subunit. Contacts proteins S8 and S17. May interact with IF1 in the 30S initiation complex.

In terms of biological role, with S4 and S5 plays an important role in translational accuracy. Interacts with and stabilizes bases of the 16S rRNA that are involved in tRNA selection in the A site and with the mRNA backbone. Located at the interface of the 30S and 50S subunits, it traverses the body of the 30S subunit contacting proteins on the other side and probably holding the rRNA structure together. The combined cluster of proteins S8, S12 and S17 appears to hold together the shoulder and platform of the 30S subunit. This chain is Small ribosomal subunit protein uS12, found in Erwinia amylovora (Fire blight bacteria).